We begin with the raw amino-acid sequence, 286 residues long: ATP synthase gamma chain (286 aa).

It belongs to the ATPase gamma chain family. In terms of assembly, F-type ATPases have 2 components, CF(1) - the catalytic core - and CF(0) - the membrane proton channel. CF(1) has five subunits: alpha(3), beta(3), gamma(1), delta(1), epsilon(1). CF(0) has three main subunits: a, b and c.

The protein localises to the cell inner membrane. Functionally, produces ATP from ADP in the presence of a proton gradient across the membrane. The gamma chain is believed to be important in regulating ATPase activity and the flow of protons through the CF(0) complex. This is ATP synthase gamma chain from Alteromonas mediterranea (strain DSM 17117 / CIP 110805 / LMG 28347 / Deep ecotype).